A 568-amino-acid polypeptide reads, in one-letter code: Methionine--tRNA ligase (568 aa).

The 'HIGH' region signature appears at Pro10–Asn20. Cys143, Cys146, Cys156, and Cys159 together coordinate Zn(2+). A 'KMSKS' region motif is present at residues Lys333–Ser337. Lys336 contacts ATP.

This sequence belongs to the class-I aminoacyl-tRNA synthetase family. MetG type 1 subfamily. Zn(2+) is required as a cofactor.

It is found in the cytoplasm. The enzyme catalyses tRNA(Met) + L-methionine + ATP = L-methionyl-tRNA(Met) + AMP + diphosphate. Functionally, is required not only for elongation of protein synthesis but also for the initiation of all mRNA translation through initiator tRNA(fMet) aminoacylation. The protein is Methionine--tRNA ligase of Metallosphaera sedula (strain ATCC 51363 / DSM 5348 / JCM 9185 / NBRC 15509 / TH2).